The chain runs to 564 residues: MQHETKMENQSWLKKLARRLGPGHIVNLCFIVVLLFSTLLTWREVVVLEDAYISSQRNHLENVANALDKHLQYNVDKLIFLRNGMREALIAPLDFTSLRDAVTEFEQHRDEHAWQIELNRRRTLPVNGVSDALVSEGNLLSRENESLDNEITAALEVGYLLRLAHNSSSMVEQAMYVSRAGFYVSTQPTLFTRNVPTRYYGYVTQPWFIGHSQRENRHRAVRWFTSQPEHASNTEPQVTVSVPVDSNNYWYGVLGMSIPVRTMQQFLRNAIDKNLDGEYQLYDSKLRFLTSSNPDHPTGNIFDPRELAFLAQAMEHDTRGGIRMDSRYVSWERLDHFDGVLVRVHTLSEGVRGDFGSISIALTLLWALFTTMLLISWYVIRRMVSNMYVLQSSLQWQAWHDTLTRLYNRGALFEKARPLAKLCQTHQHPFSVIQVDLDHFKAINDRFGHQAGDRVLSHAAGLISSSLRAQDVAGRVGGEEFCVILPGASLTEAAEVAERIRLKLNEKEMLIAKSTTIRISASLGVSSSEETGDYDFEQLQSLADRRLYLAKQAGRNRVFASDNT.

The next 2 membrane-spanning stretches (helical) occupy residues 20–40 and 360–380; these read LGPGHIVNLCFIVVLLFSTLL and IALTLLWALFTTMLLISWYVI. A GGDEF domain is found at 428–563; that stretch reads HPFSVIQVDL…GRNRVFASDN (136 aa). D436 provides a ligand contact to Mg(2+). 3 residues coordinate substrate: N444, H449, and D453. E479 contacts Mg(2+). Catalysis depends on E479, which acts as the Proton acceptor.

In terms of assembly, homodimer. Requires Mg(2+) as cofactor.

It is found in the cell inner membrane. It carries out the reaction 2 GTP = 3',3'-c-di-GMP + 2 diphosphate. Its pathway is glycan metabolism; bacterial cellulose biosynthesis. The protein operates within purine metabolism; 3',5'-cyclic di-GMP biosynthesis. Its function is as follows. Catalyzes the synthesis of cyclic-di-GMP (c-di-GMP) via the condensation of 2 GTP molecules. Cyclic-di-GMP is a second messenger which controls cell surface-associated traits in bacteria. Involved in the regulation of cellulose production. The sequence is that of Probable diguanylate cyclase DgcQ from Shigella dysenteriae serotype 1 (strain Sd197).